The primary structure comprises 686 residues: X-linked interleukin-1 receptor accessory protein-like 2 (686 aa).

The first 16 residues, 1-16 (MKPPFLLALVVCSVVS), serve as a signal peptide directing secretion. The Extracellular portion of the chain corresponds to 17–354 (TNLKMVSKRN…LLRKKDLIYK (338 aa)). The 115-residue stretch at 18–132 (NLKMVSKRNS…YCMKVSMSLT (115 aa)) folds into the Ig-like C2-type 1 domain. Cys53 and Cys116 are oxidised to a cystine. Asn63, Asn120, Asn136, Asn211, and Asn328 each carry an N-linked (GlcNAc...) asparagine glycan. 2 consecutive Ig-like C2-type domains span residues 141–232 (CYNS…LKVT) and 239–347 (PPKP…VLLR). Disulfide bonds link Cys162/Cys214 and Cys265/Cys331. Residues 355–375 (IELAGGLGAIFLLLVLLVVIY) traverse the membrane as a helical segment. Residues 376–686 (KCYNIELMLF…KELSFTSDIW (311 aa)) lie on the Cytoplasmic side of the membrane. The TIR domain occupies 400-556 (KEYDAYLSYT…KFWKHLVYEM (157 aa)). Glu488 is an active-site residue.

It belongs to the interleukin-1 receptor family. Detected at low levels in fetal and adult brain, in particular in the frontal lobe, temporal lobe and cerebellum. Detected at very low levels in skin, liver, fetal ovary and in placenta.

It is found in the membrane. It catalyses the reaction NAD(+) + H2O = ADP-D-ribose + nicotinamide + H(+). In Homo sapiens (Human), this protein is X-linked interleukin-1 receptor accessory protein-like 2 (IL1RAPL2).